A 142-amino-acid polypeptide reads, in one-letter code: Large ribosomal subunit protein uL13 (142 aa).

Belongs to the universal ribosomal protein uL13 family. In terms of assembly, part of the 50S ribosomal subunit.

Its function is as follows. This protein is one of the early assembly proteins of the 50S ribosomal subunit, although it is not seen to bind rRNA by itself. It is important during the early stages of 50S assembly. This chain is Large ribosomal subunit protein uL13, found in Pseudomonas putida (strain W619).